We begin with the raw amino-acid sequence, 501 residues long: Lysine--tRNA ligase (501 aa).

Glu-402 and Glu-409 together coordinate Mg(2+).

The protein belongs to the class-II aminoacyl-tRNA synthetase family. In terms of assembly, homodimer. The cofactor is Mg(2+).

It is found in the cytoplasm. The enzyme catalyses tRNA(Lys) + L-lysine + ATP = L-lysyl-tRNA(Lys) + AMP + diphosphate. This chain is Lysine--tRNA ligase, found in Helicobacter pylori (strain P12).